The following is a 185-amino-acid chain: Peptidyl-tRNA hydrolase (185 aa).

Tyrosine 14 contributes to the tRNA binding site. Residue histidine 19 is the Proton acceptor of the active site. 3 residues coordinate tRNA: tyrosine 65, asparagine 67, and asparagine 113.

It belongs to the PTH family. Monomer.

It localises to the cytoplasm. It catalyses the reaction an N-acyl-L-alpha-aminoacyl-tRNA + H2O = an N-acyl-L-amino acid + a tRNA + H(+). Its function is as follows. Hydrolyzes ribosome-free peptidyl-tRNAs (with 1 or more amino acids incorporated), which drop off the ribosome during protein synthesis, or as a result of ribosome stalling. Functionally, catalyzes the release of premature peptidyl moieties from peptidyl-tRNA molecules trapped in stalled 50S ribosomal subunits, and thus maintains levels of free tRNAs and 50S ribosomes. This chain is Peptidyl-tRNA hydrolase, found in Rickettsia canadensis (strain McKiel).